A 102-amino-acid polypeptide reads, in one-letter code: Small ribosomal subunit protein uS10 (102 aa).

This sequence belongs to the universal ribosomal protein uS10 family. Part of the 30S ribosomal subunit.

Its function is as follows. Involved in the binding of tRNA to the ribosomes. In Brucella abortus (strain S19), this protein is Small ribosomal subunit protein uS10.